The following is an 87-amino-acid chain: U3-theraphotoxin-Hhn1a 8 (87 aa).

Positions 1 to 24 (MVNMKASMFLTFAGLVLLFVVCYA) are cleaved as a signal peptide. A propeptide spanning residues 25 to 52 (SGSEEKEFPKEMLSSIFAVDNDFKQEER) is cleaved from the precursor. 3 cysteine pairs are disulfide-bonded: cysteine 54/cysteine 67, cysteine 61/cysteine 72, and cysteine 66/cysteine 79.

It belongs to the neurotoxin 10 (Hwtx-1) family. 51 (Hntx-8) subfamily. Hntx-8 sub-subfamily. Expressed by the venom gland.

It is found in the secreted. In terms of biological role, ion channel inhibitor. The sequence is that of U3-theraphotoxin-Hhn1a 8 from Cyriopagopus hainanus (Chinese bird spider).